Reading from the N-terminus, the 195-residue chain is N-terminal acetyltransferase B complex catalytic subunit NAT3 (195 aa).

The N-acetyltransferase domain maps to 2–172 (TTIQPFEPVD…DAFDMRKAMA (171 aa)).

Belongs to the acetyltransferase family. GNAT subfamily. As to quaternary structure, component of the N-terminal acetyltransferase B (NatB) complex, which is composed of NAT3 and MDM20.

It is found in the cytoplasm. It catalyses the reaction N-terminal L-methionyl-L-asparaginyl-[protein] + acetyl-CoA = N-terminal N(alpha)-acetyl-L-methionyl-L-asparaginyl-[protein] + CoA + H(+). It carries out the reaction N-terminal L-methionyl-L-glutaminyl-[protein] + acetyl-CoA = N-terminal N(alpha)-acetyl-L-methionyl-L-glutaminyl-[protein] + CoA + H(+). The catalysed reaction is N-terminal L-methionyl-L-aspartyl-[protein] + acetyl-CoA = N-terminal N(alpha)-acetyl-L-methionyl-L-aspartyl-[protein] + CoA + H(+). The enzyme catalyses N-terminal L-methionyl-L-glutamyl-[protein] + acetyl-CoA = N-terminal N(alpha)-acetyl-L-methionyl-L-glutamyl-[protein] + CoA + H(+). Functionally, catalytic subunit of the NatB N-terminal acetyltransferase, which catalyzes acetylation of the amino-terminal methionine residues of all proteins beginning with Met-Asp or Met-Glu and of some proteins beginning with Met-Asn, Met-Gln or Met-Met. NatB acetylates TPM1 protein and regulates tropomyocin-actin interactions, it is presumed to N-acetylate 15% of all yeast proteins. This is N-terminal acetyltransferase B complex catalytic subunit NAT3 from Saccharomyces cerevisiae (strain ATCC 204508 / S288c) (Baker's yeast).